Here is a 75-residue protein sequence, read N- to C-terminus: MAITSKYSNKQIEQMLTEMVDVLDKHRAPADLSLMLVGNIATNVLNQEVPAEQRQIIAEKFAQALLSSLDKPKTH.

It belongs to the UPF0352 family.

The polypeptide is UPF0352 protein VF_1649 (Aliivibrio fischeri (strain ATCC 700601 / ES114) (Vibrio fischeri)).